The following is a 384-amino-acid chain: Bifunctional enzyme IspD/IspF (384 aa).

2-C-methyl-D-erythritol 4-phosphate cytidylyltransferase regions lie at residues 1-227 and 1-228; these read MAKV…EGEQ and MAKV…GEQR. The tract at residues 228–384 is 2-C-methyl-D-erythritol 2,4-cyclodiphosphate synthase; that stretch reads RIGSGFDVHR…QATALITLPF (157 aa). The a divalent metal cation site is built by aspartate 234 and histidine 236. Residues 234-236 and 260-261 contribute to the 4-CDP-2-C-methyl-D-erythritol 2-phosphate site; these read DVH and HS. Residue histidine 268 coordinates a divalent metal cation. 4-CDP-2-C-methyl-D-erythritol 2-phosphate-binding positions include 282–284, 358–361, phenylalanine 365, and arginine 368; these read DIG and TTTE.

It in the N-terminal section; belongs to the IspD/TarI cytidylyltransferase family. IspD subfamily. The protein in the C-terminal section; belongs to the IspF family. A divalent metal cation is required as a cofactor.

The enzyme catalyses 2-C-methyl-D-erythritol 4-phosphate + CTP + H(+) = 4-CDP-2-C-methyl-D-erythritol + diphosphate. It catalyses the reaction 4-CDP-2-C-methyl-D-erythritol 2-phosphate = 2-C-methyl-D-erythritol 2,4-cyclic diphosphate + CMP. The protein operates within isoprenoid biosynthesis; isopentenyl diphosphate biosynthesis via DXP pathway; isopentenyl diphosphate from 1-deoxy-D-xylulose 5-phosphate: step 2/6. Its pathway is isoprenoid biosynthesis; isopentenyl diphosphate biosynthesis via DXP pathway; isopentenyl diphosphate from 1-deoxy-D-xylulose 5-phosphate: step 4/6. Functionally, bifunctional enzyme that catalyzes the formation of 4-diphosphocytidyl-2-C-methyl-D-erythritol from CTP and 2-C-methyl-D-erythritol 4-phosphate (MEP) (IspD), and catalyzes the conversion of 4-diphosphocytidyl-2-C-methyl-D-erythritol 2-phosphate (CDP-ME2P) to 2-C-methyl-D-erythritol 2,4-cyclodiphosphate (ME-CPP) with a corresponding release of cytidine 5-monophosphate (CMP) (IspF). This Rhodospirillum rubrum (strain ATCC 11170 / ATH 1.1.1 / DSM 467 / LMG 4362 / NCIMB 8255 / S1) protein is Bifunctional enzyme IspD/IspF.